Consider the following 534-residue polypeptide: Lariat debranching enzyme A (534 aa).

Residues C8, H10, D39, and N84 each contribute to the a divalent metal cation site. Residues S124–R154 form a lariat recognition loop region. Residues H174, H226, and H228 each coordinate a divalent metal cation. 2 disordered regions span residues E386–E439 and S469–E534. Positions E388–A400 are enriched in acidic residues. The span at S413–N424 shows a compositional bias: polar residues. Residues I428–E439 are compositionally biased toward acidic residues. Over residues E484–Q499 the composition is skewed to basic and acidic residues.

Belongs to the lariat debranching enzyme family. Fe(2+) is required as a cofactor. The cofactor is Zn(2+). It depends on Mn(2+) as a cofactor.

Its subcellular location is the nucleus. With respect to regulation, active in presence of diverse metals including Fe(2+), Zn(2+), Mn(2+). Also activated by Ca(2+). Binds two metal cations in two adjacent alpha and beta metal-binding pockets. Its function is as follows. Cleaves the 2'-5' phosphodiester linkage at the branch point of excised lariat intron RNA and converts them into linear molecules that can be subsequently degraded, thereby facilitating ribonucleotide turnover. Linked to its role in pre-mRNA processing mechanism, may also participate in retrovirus replication and have an antiviral cell-intrinsic defense function. The protein is Lariat debranching enzyme A (dbr1-a) of Xenopus laevis (African clawed frog).